Reading from the N-terminus, the 335-residue chain is Large ribosomal subunit protein uL10 (335 aa).

Residues 304 to 335 (GAAAPVEEAPVEEKKEEKKEEAAPAAGLGMLF) form a disordered region. Residues 314–325 (VEEKKEEKKEEA) show a composition bias toward basic and acidic residues.

The protein belongs to the universal ribosomal protein uL10 family. In terms of assembly, part of the 50S ribosomal subunit. Forms part of the ribosomal stalk which helps the ribosome interact with GTP-bound translation factors. Forms a heptameric L10(L12)2(L12)2(L12)2 complex, where L10 forms an elongated spine to which the L12 dimers bind in a sequential fashion.

Forms part of the ribosomal stalk, playing a central role in the interaction of the ribosome with GTP-bound translation factors. The protein is Large ribosomal subunit protein uL10 of Methanococcus maripaludis (strain C6 / ATCC BAA-1332).